Here is a 93-residue protein sequence, read N- to C-terminus: Early nodulin-36B (93 aa).

This is Early nodulin-36B from Glycine max (Soybean).